Here is a 211-residue protein sequence, read N- to C-terminus: Thymidylate kinase (211 aa).

Gly-11–Thr-18 lines the ATP pocket.

The protein belongs to the thymidylate kinase family.

The enzyme catalyses dTMP + ATP = dTDP + ADP. Phosphorylation of dTMP to form dTDP in both de novo and salvage pathways of dTTP synthesis. The polypeptide is Thymidylate kinase (Streptococcus pyogenes serotype M18 (strain MGAS8232)).